The following is a 43-amino-acid chain: Protein PsbN (43 aa).

Residues 5 to 27 (TLVAISISCLLVSFTGYALYTAF) form a helical membrane-spanning segment.

The protein belongs to the PsbN family.

It localises to the plastid. The protein resides in the chloroplast thylakoid membrane. Its function is as follows. May play a role in photosystem I and II biogenesis. The protein is Protein PsbN of Cryptomeria japonica (Japanese cedar).